The primary structure comprises 498 residues: Guanosine-5'-triphosphate,3'-diphosphate pyrophosphatase (498 aa).

This sequence belongs to the GppA/Ppx family. GppA subfamily.

It catalyses the reaction guanosine 3'-diphosphate 5'-triphosphate + H2O = guanosine 3',5'-bis(diphosphate) + phosphate + H(+). It functions in the pathway purine metabolism; ppGpp biosynthesis; ppGpp from GTP: step 2/2. In terms of biological role, catalyzes the conversion of pppGpp to ppGpp. Guanosine pentaphosphate (pppGpp) is a cytoplasmic signaling molecule which together with ppGpp controls the 'stringent response', an adaptive process that allows bacteria to respond to amino acid starvation, resulting in the coordinated regulation of numerous cellular activities. The chain is Guanosine-5'-triphosphate,3'-diphosphate pyrophosphatase from Pectobacterium carotovorum subsp. carotovorum (strain PC1).